The following is a 251-amino-acid chain: Probable transcriptional regulatory protein CC_3243 (251 aa).

The protein belongs to the TACO1 family.

The protein localises to the cytoplasm. The protein is Probable transcriptional regulatory protein CC_3243 of Caulobacter vibrioides (strain ATCC 19089 / CIP 103742 / CB 15) (Caulobacter crescentus).